The primary structure comprises 561 residues: Lysine--tRNA ligase (561 aa).

Mg(2+) contacts are provided by Glu409 and Glu416.

It belongs to the class-II aminoacyl-tRNA synthetase family. In terms of assembly, homodimer. Requires Mg(2+) as cofactor.

Its subcellular location is the cytoplasm. It carries out the reaction tRNA(Lys) + L-lysine + ATP = L-lysyl-tRNA(Lys) + AMP + diphosphate. This Nostoc punctiforme (strain ATCC 29133 / PCC 73102) protein is Lysine--tRNA ligase.